A 512-amino-acid polypeptide reads, in one-letter code: Cytochrome P450 26B1 (512 aa).

Cys441 lines the heme pocket.

This sequence belongs to the cytochrome P450 family. Heme serves as cofactor.

The protein localises to the endoplasmic reticulum membrane. It localises to the microsome membrane. It catalyses the reaction all-trans-retinoate + reduced [NADPH--hemoprotein reductase] + O2 = all-trans-4-hydroxyretinoate + oxidized [NADPH--hemoprotein reductase] + H2O + H(+). It carries out the reaction all-trans-retinoate + reduced [NADPH--hemoprotein reductase] + O2 = all-trans-18-hydroxyretinoate + oxidized [NADPH--hemoprotein reductase] + H2O + H(+). In terms of biological role, a cytochrome P450 monooxygenase involved in the metabolism of retinoates (RAs), the active metabolites of vitamin A, and critical signaling molecules in animals. RAs exist as at least four different isomers: all-trans-RA (atRA), 9-cis-RA, 13-cis-RA, and 9,13-dicis-RA, where atRA is considered to be the biologically active isomer, although 9-cis-RA and 13-cis-RA also have activity. Catalyzes the hydroxylation of atRA primarily at C-4 and C-18, thereby contributing to the regulation of atRA homeostasis and signaling. Hydroxylation of atRA limits its biological activity and initiates a degradative process leading to its eventual elimination. Involved in the convertion of atRA to all-trans-4-oxo-RA. Can oxidize all-trans-13,14-dihydroretinoate (DRA) to metabolites which could include all-trans-4-oxo-DRA, all-trans-4-hydroxy-DRA, all-trans-5,8-epoxy-DRA, and all-trans-18-hydroxy-DRA. Shows preference for the following substrates: atRA &gt; 9-cis-RA &gt; 13-cis-RA. Plays a central role in germ cell development: acts by degrading RAs in the developing testis, preventing STRA8 expression, thereby leading to delay of meiosis. Required for the maintenance of the undifferentiated state of male germ cells during embryonic development in Sertoli cells, inducing arrest in G0 phase of the cell cycle and preventing meiotic entry. Plays a role in skeletal development, both at the level of patterning and in the ossification of bone and the establishment of some synovial joints. Essential for postnatal survival. Its function is as follows. Also has a significant activity in oxidation of tazarotenic acid and may therefore metabolize that xenobiotic in vivo. The sequence is that of Cytochrome P450 26B1 (Cyp26b1) from Rattus norvegicus (Rat).